A 392-amino-acid chain; its full sequence is S-adenosylmethionine decarboxylase proenzyme (392 aa).

Catalysis depends on residues E43 and E46. S100 (schiff-base intermediate with substrate; via pyruvic acid) is an active-site residue. S100 is subject to Pyruvic acid (Ser); by autocatalysis. C114 serves as the catalytic Proton donor; for catalytic activity. Residues S264 and H277 each act as proton acceptor; for processing activity in the active site.

Belongs to the eukaryotic AdoMetDC family. Requires pyruvate as cofactor. In terms of processing, is synthesized initially as an inactive proenzyme. Formation of the active enzyme involves a self-maturation process in which the active site pyruvoyl group is generated from an internal serine residue via an autocatalytic post-translational modification. Two non-identical subunits are generated from the proenzyme in this reaction, and the pyruvate is formed at the N-terminus of the alpha chain, which is derived from the carboxyl end of the proenzyme. The post-translation cleavage follows an unusual pathway, termed non-hydrolytic serinolysis, in which the side chain hydroxyl group of the serine supplies its oxygen atom to form the C-terminus of the beta chain, while the remainder of the serine residue undergoes an oxidative deamination to produce ammonia and the pyruvoyl group blocking the N-terminus of the alpha chain.

The enzyme catalyses S-adenosyl-L-methionine + H(+) = S-adenosyl 3-(methylsulfanyl)propylamine + CO2. The protein operates within amine and polyamine biosynthesis; S-adenosylmethioninamine biosynthesis; S-adenosylmethioninamine from S-adenosyl-L-methionine: step 1/1. This chain is S-adenosylmethionine decarboxylase proenzyme, found in Leishmania infantum.